The chain runs to 595 residues: MQQQSEISKQVFISPDLSDNYNNNNSNINTNNNNSINDYENQNNGLVVPQSNQNQQYQDDQNDSFDDDSMDEGEEKSNLIIDESQQNSLNNNNNNSENNNINNSENNNINNSENNIHNNNNNNNNNNNNNNNNNNNNNNNNNNNNNNNNNNNNNTINNNNNNNNINNNINNNNNNYNNNNINNNNNINNNNNNNNENNNNNENNNNNNENNNKFIGSPMGEPQINNNNNNNNNNNNNNNNNNNNNNNNKNNNNNNNNNNNNNNNRKFDDQQIIKDLENRLKEAKKTNQLLDEKCNQLKKNITEKNHLLSRYINTLNSSVLQKKTLNRNRSRSRSRSNSRSHSRSRSRSRSLSSISRSRSRSRLIYSRSPSQSPQKNNNNNNNTNKSNSNNNNNHFNNNNNNNNNNNNNNNNNNNNNNNNNNKRKSEDDNQDDGKKKHRKNAIWTQEEDEKMAQLYNKYGKSWKAIHSHFDDKTREQVQSHGQYLIRIGKLEDIHRDGRKERRKGKQALQERQQQLEQQNQQNNNNNNYNNNINNNSNYNNNNNNINNSINNNNSNQNNYSDNNSNNNNNYGDNNITHNNYNDNSLNSSNYVNNDN.

4 disordered regions span residues 1 to 47, 55 to 74, 82 to 266, and 319 to 445; these read MQQQ…NGLV, QQYQ…DEGE, DESQ…NNRK, and VLQK…IWTQ. Low complexity predominate over residues 19 to 47; that stretch reads DNYNNNNSNINTNNNNSINDYENQNNGLV. Residues 60 to 74 show a composition bias toward acidic residues; sequence DQNDSFDDDSMDEGE. Low complexity-rich tracts occupy residues 90–212 and 225–264; these read NNNN…ENNN and NNNN…NNNN. Residues 324 to 348 are compositionally biased toward basic residues; that stretch reads TLNRNRSRSRSRSNSRSHSRSRSRS. 2 stretches are compositionally biased toward low complexity: residues 349–368 and 376–420; these read RSLS…YSRS and NNNN…NNNN. Over residues 423 to 434 the composition is skewed to basic and acidic residues; it reads RKSEDDNQDDGK. Residues 435-489 form the HTH myb-type domain; that stretch reads KKHRKNAIWTQEEDEKMAQLYNKYGKSWKAIHSHFDDKTREQVQSHGQYLIRIGK. The H-T-H motif DNA-binding region spans 462 to 485; it reads WKAIHSHFDDKTREQVQSHGQYLI. Residues 494-595 are disordered; it reads HRDGRKERRK…NSSNYVNNDN (102 aa). Low complexity predominate over residues 517 to 595; the sequence is QQNQQNNNNN…NSSNYVNNDN (79 aa).

Its subcellular location is the nucleus. The protein is Myb-like protein D (mybD) of Dictyostelium discoideum (Social amoeba).